The following is a 95-amino-acid chain: Aspartyl/glutamyl-tRNA(Asn/Gln) amidotransferase subunit C (95 aa).

Belongs to the GatC family. As to quaternary structure, heterotrimer of A, B and C subunits.

The catalysed reaction is L-glutamyl-tRNA(Gln) + L-glutamine + ATP + H2O = L-glutaminyl-tRNA(Gln) + L-glutamate + ADP + phosphate + H(+). It carries out the reaction L-aspartyl-tRNA(Asn) + L-glutamine + ATP + H2O = L-asparaginyl-tRNA(Asn) + L-glutamate + ADP + phosphate + 2 H(+). Allows the formation of correctly charged Asn-tRNA(Asn) or Gln-tRNA(Gln) through the transamidation of misacylated Asp-tRNA(Asn) or Glu-tRNA(Gln) in organisms which lack either or both of asparaginyl-tRNA or glutaminyl-tRNA synthetases. The reaction takes place in the presence of glutamine and ATP through an activated phospho-Asp-tRNA(Asn) or phospho-Glu-tRNA(Gln). The chain is Aspartyl/glutamyl-tRNA(Asn/Gln) amidotransferase subunit C from Methylobacterium nodulans (strain LMG 21967 / CNCM I-2342 / ORS 2060).